Consider the following 230-residue polypeptide: Cysteine S-methyltransferase OspZ (230 aa).

The tract at residues 49–52 is interaction with host proteins TAB2, TAB3 and ZRANB3; that stretch reads GITR. S-adenosyl-L-methionine-binding residues include Ala92, Ser98, Arg107, Gln111, Tyr204, and Glu208.

This sequence belongs to the NleE/OspZ family. In terms of assembly, monomer.

It localises to the secreted. The protein resides in the host cytoplasm. It is found in the host nucleus. It carries out the reaction L-cysteinyl-[protein] + S-adenosyl-L-methionine = S-methyl-L-cysteinyl-[protein] + S-adenosyl-L-homocysteine + H(+). Functionally, cysteine methyltransferase effector that inhibits host cell NF-kappa-B activation by preventing nuclear translocation of host protein RELA/p65. Acts by mediating cysteine methylation of host proteins TAB2 and TAB3: methylation of a conserved cysteine residue of the RanBP2-type zinc finger (NZF) of TAB2 and TAB3 disrupts zinc-binding, thereby inactivating the ubiquitin chain-binding activity of TAB2 and TAB3, leading to NF-kappa-B inactivation. Also mediates cysteine methylation of host protein ZRANB3, inactivating its ability to bind ubiquitin chains. The polypeptide is Cysteine S-methyltransferase OspZ (Shigella boydii).